Here is a 394-residue protein sequence, read N- to C-terminus: Probable purine permease 8 (394 aa).

The next 10 membrane-spanning stretches (helical) occupy residues 45–65, 77–97, 113–133, 139–159, 172–192, 208–228, 247–267, 289–309, 315–335, and 344–364; these read WLRI…STIL, TWMG…FRFF, FSSF…VSAN, VGLL…QLAF, FTPF…LLVV, VIGI…LSLV, LVAY…FASG, TLAS…GLIF, FSNS…VIVF, and IFSI…HYLD. The disordered stretch occupies residues 373-394; it reads TSPVGDPHLLPAEEGHTNIHSV. Over residues 383–394 the composition is skewed to basic and acidic residues; the sequence is PAEEGHTNIHSV.

The protein belongs to the purine permeases (TC 2.A.7.14) family.

The protein localises to the membrane. The chain is Probable purine permease 8 (PUP8) from Arabidopsis thaliana (Mouse-ear cress).